We begin with the raw amino-acid sequence, 100 residues long: Apolipoprotein C-II (100 aa).

Positions 1–22 are cleaved as a signal peptide; it reads MGTRFLLALFLVLLVLGFEVQG. The lipid binding stretch occupies residues 66–74; that stretch reads TVDEKLRDM. A lipoprotein lipase cofactor region spans residues 78–100; sequence STAAVSTYAGIFTDQLLTLLKGD.

Belongs to the apolipoprotein C2 family. In terms of processing, proapolipoprotein C-II is synthesized as a sialic acid containing glycoprotein which is subsequently desialylated prior to its proteolytic processing. Post-translationally, proapolipoprotein C-II, the major form found in plasma undergoes proteolytic cleavage of its N-terminal hexapeptide to generate apolipoprotein C-II, which occurs as the minor form in plasma.

The protein resides in the secreted. Functionally, component of chylomicrons, very low-density lipoproteins (VLDL), low-density lipoproteins (LDL), and high-density lipoproteins (HDL) in plasma. Plays an important role in lipoprotein metabolism as an activator of lipoprotein lipase. Both proapolipoprotein C-II and apolipoprotein C-II can activate lipoprotein lipase. This chain is Apolipoprotein C-II (APOC2), found in Otolemur garnettii (Small-eared galago).